A 553-amino-acid polypeptide reads, in one-letter code: Protein YloV (553 aa).

Residues 9-201 (RTFAEMILAG…LLCVYEGFLA (193 aa)) enclose the DhaL domain.

This chain is Protein YloV (yloV), found in Bacillus subtilis (strain 168).